The primary structure comprises 207 residues: Holliday junction branch migration complex subunit RuvA (207 aa).

The domain I stretch occupies residues 1–64 (MIGRLRGNLL…EDAQLLYGFN (64 aa)). The domain II stretch occupies residues 65–143 (TKNERALFRE…GWGAGDLFTP (79 aa)). Positions 144-158 (ATDAAPMDDGSEFIT) are flexible linker. Residues 159-207 (SPQSAVDEAVSALIALGYKPQQASKTVSQIAKPDMTSEVLIRESLKSMI) form a domain III region.

It belongs to the RuvA family. In terms of assembly, homotetramer. Forms an RuvA(8)-RuvB(12)-Holliday junction (HJ) complex. HJ DNA is sandwiched between 2 RuvA tetramers; dsDNA enters through RuvA and exits via RuvB. An RuvB hexamer assembles on each DNA strand where it exits the tetramer. Each RuvB hexamer is contacted by two RuvA subunits (via domain III) on 2 adjacent RuvB subunits; this complex drives branch migration. In the full resolvosome a probable DNA-RuvA(4)-RuvB(12)-RuvC(2) complex forms which resolves the HJ.

The protein resides in the cytoplasm. Functionally, the RuvA-RuvB-RuvC complex processes Holliday junction (HJ) DNA during genetic recombination and DNA repair, while the RuvA-RuvB complex plays an important role in the rescue of blocked DNA replication forks via replication fork reversal (RFR). RuvA specifically binds to HJ cruciform DNA, conferring on it an open structure. The RuvB hexamer acts as an ATP-dependent pump, pulling dsDNA into and through the RuvAB complex. HJ branch migration allows RuvC to scan DNA until it finds its consensus sequence, where it cleaves and resolves the cruciform DNA. The protein is Holliday junction branch migration complex subunit RuvA of Aliivibrio fischeri (strain ATCC 700601 / ES114) (Vibrio fischeri).